The following is a 387-amino-acid chain: Probable protein phosphatase 2C 25 (387 aa).

The PPM-type phosphatase domain occupies 52 to 351 (EFSFAVVQAN…DDITVVVVYI (300 aa)). Positions 83, 84, 283, and 342 each coordinate Mn(2+).

The protein belongs to the PP2C family. It depends on Mg(2+) as a cofactor. Requires Mn(2+) as cofactor.

It catalyses the reaction O-phospho-L-seryl-[protein] + H2O = L-seryl-[protein] + phosphate. It carries out the reaction O-phospho-L-threonyl-[protein] + H2O = L-threonyl-[protein] + phosphate. The polypeptide is Probable protein phosphatase 2C 25 (Oryza sativa subsp. japonica (Rice)).